A 180-amino-acid chain; its full sequence is Cell division protein ZapC (180 aa).

The protein belongs to the ZapC family. Interacts directly with FtsZ.

It localises to the cytoplasm. Functionally, contributes to the efficiency of the cell division process by stabilizing the polymeric form of the cell division protein FtsZ. Acts by promoting interactions between FtsZ protofilaments and suppressing the GTPase activity of FtsZ. The protein is Cell division protein ZapC of Vibrio cholerae serotype O1 (strain ATCC 39315 / El Tor Inaba N16961).